The primary structure comprises 309 residues: Homoserine O-succinyltransferase (309 aa).

The active-site Acyl-thioester intermediate is Cys-142. Residues Lys-163 and Ser-192 each contribute to the substrate site. The Proton acceptor role is filled by His-235. The active site involves Glu-237. Arg-249 contacts substrate.

It belongs to the MetA family.

It is found in the cytoplasm. It carries out the reaction L-homoserine + succinyl-CoA = O-succinyl-L-homoserine + CoA. It participates in amino-acid biosynthesis; L-methionine biosynthesis via de novo pathway; O-succinyl-L-homoserine from L-homoserine: step 1/1. In terms of biological role, transfers a succinyl group from succinyl-CoA to L-homoserine, forming succinyl-L-homoserine. The chain is Homoserine O-succinyltransferase from Proteus mirabilis (strain HI4320).